The following is a 365-amino-acid chain: Aminomethyltransferase (365 aa).

The protein belongs to the GcvT family. As to quaternary structure, the glycine cleavage system is composed of four proteins: P, T, L and H.

It carries out the reaction N(6)-[(R)-S(8)-aminomethyldihydrolipoyl]-L-lysyl-[protein] + (6S)-5,6,7,8-tetrahydrofolate = N(6)-[(R)-dihydrolipoyl]-L-lysyl-[protein] + (6R)-5,10-methylene-5,6,7,8-tetrahydrofolate + NH4(+). Functionally, the glycine cleavage system catalyzes the degradation of glycine. The sequence is that of Aminomethyltransferase from Synechococcus sp. (strain CC9902).